Reading from the N-terminus, the 1311-residue chain is Kinase and exchange factor for Rac A (1311 aa).

One can recognise a Protein kinase domain in the interval 18 to 316; it reads LVFKDIIGKG…STIVTILESI (299 aa). ATP-binding positions include 24–32 and lysine 45; that span reads IGKGNFGCV. Residue aspartate 138 is the Proton acceptor of the active site. 3 disordered regions span residues 169–201, 360–426, and 446–471; these read NGSDSSSSEDESDSECVNGAAGGGGDDVYKNNG, QQQS…TTTT, and PLSKHQQQQQRNQNSSIIDNNSLIGS. Positions 451 to 471 are enriched in low complexity; the sequence is QQQQQRNQNSSIIDNNSLIGS. One can recognise an IQ domain in the interval 650–679; the sequence is ELNLIIKLQSRIRGWLVRRRYKIFLSNWKL. Positions 691–927 constitute a DH domain; it reads QWIRLFNQLI…RETSNYIQSQ (237 aa). Composition is skewed to low complexity over residues 994–1021 and 1031–1044; these read SKYNNNNNINTNNNNNNLTSSATQTNSN and STSNANSDNSGNNN. Disordered stretches follow at residues 994–1044, 1114–1145, and 1208–1311; these read SKYN…GNNN, NNPNGGGSNNNSIGGGGGGRGGSGNNSNNGSI, and GTST…FSKD. The segment covering 1117–1137 has biased composition (gly residues); it reads NGGGSNNNSIGGGGGGRGGSG. Positions 1208–1229 are enriched in polar residues; it reads GTSTPERKTSLVNMSPSTTSSL. The span at 1230 to 1245 shows a compositional bias: low complexity; it reads NNIDSNYNNNNNNVTN. Over residues 1246-1257 the composition is skewed to polar residues; it reads TPIKSVTSSPSI. Residues 1263–1276 show a composition bias toward low complexity; that stretch reads NDNNQQPQLPSQPN. The segment covering 1277–1287 has biased composition (polar residues); the sequence is EEFQFTVPTTP. The segment covering 1290-1303 has biased composition (basic residues); the sequence is KKKKRGSFSSKLKR.

This sequence belongs to the protein kinase superfamily. TKL Ser/Thr protein kinase family. Mg(2+) serves as cofactor.

It carries out the reaction L-seryl-[protein] + ATP = O-phospho-L-seryl-[protein] + ADP + H(+). The catalysed reaction is L-threonyl-[protein] + ATP = O-phospho-L-threonyl-[protein] + ADP + H(+). In Dictyostelium discoideum (Social amoeba), this protein is Kinase and exchange factor for Rac A (kxcA).